The sequence spans 209 residues: Regulator of G-protein signaling 1 (209 aa).

Positions 19–42 (FSASPKDSKEHSHSLLDDKKQKKR) are disordered. Residues 24–38 (KDSKEHSHSLLDDKK) are compositionally biased toward basic and acidic residues. One can recognise an RGS domain in the interval 85–200 (SLEKLLANQT…LKSNIYLNLL (116 aa)).

As to quaternary structure, interacts with GNAI1 and GNAQ. Detected in spleen, lymph node and intestine.

The protein localises to the cell membrane. Its subcellular location is the cytoplasm. The protein resides in the cytosol. Regulates G protein-coupled receptor signaling cascades, including signaling downstream of the N-formylpeptide chemoattractant receptors and leukotriene receptors. Inhibits B cell chemotaxis toward CXCL12. Inhibits signal transduction by increasing the GTPase activity of G protein alpha subunits thereby driving them into their inactive GDP-bound form. The protein is Regulator of G-protein signaling 1 (Rgs1) of Mus musculus (Mouse).